A 363-amino-acid polypeptide reads, in one-letter code: S-adenosylmethionine:tRNA ribosyltransferase-isomerase (363 aa).

It belongs to the QueA family. In terms of assembly, monomer.

The protein resides in the cytoplasm. It catalyses the reaction 7-aminomethyl-7-carbaguanosine(34) in tRNA + S-adenosyl-L-methionine = epoxyqueuosine(34) in tRNA + adenine + L-methionine + 2 H(+). It participates in tRNA modification; tRNA-queuosine biosynthesis. In terms of biological role, transfers and isomerizes the ribose moiety from AdoMet to the 7-aminomethyl group of 7-deazaguanine (preQ1-tRNA) to give epoxyqueuosine (oQ-tRNA). The protein is S-adenosylmethionine:tRNA ribosyltransferase-isomerase of Brucella anthropi (strain ATCC 49188 / DSM 6882 / CCUG 24695 / JCM 21032 / LMG 3331 / NBRC 15819 / NCTC 12168 / Alc 37) (Ochrobactrum anthropi).